We begin with the raw amino-acid sequence, 303 residues long: Magainins (303 aa).

The N-terminal stretch at 1-18 (MFKGLFICSLIAVICANA) is a signal peptide. Propeptides lie at residues 19–26 (LPQPEASA), 33–36 (REVR), 62–72 (DAEAVGPEAFA), 79–82 (REVR), 108–118 (DAEAVGPEAFA), 125–128 (REVR), 154–164 (DAEAVGPEAFA), 171–174 (REVR), 200–210 (DAEAVGPEAFA), 217–220 (REVR), 246–256 (DAEAVGPEAFA), 263–266 (REVR), and 292–303 (DAEAVDDRRWVE).

It belongs to the gastrin/cholecystokinin family. Magainin subfamily. As to expression, synthesized in the stomach and stored in a novel granular multinucleated cell in the gastric mucosa. It is stored as active, processed peptides in large granules within the granular gland secretions of the skin.

The protein resides in the secreted. Its function is as follows. Antimicrobial peptides that inhibit the growth of numerous species of bacteria and fungi and induce osmotic lysis of protozoa. Rapidly inactivates channel catfish herpesvirus (ED(50)=48 uM) over a wide temperature range. Magainins are membrane lytic agents. The protein is Magainins (magainins) of Xenopus laevis (African clawed frog).